Reading from the N-terminus, the 57-residue chain is High-potential iron-sulfur protein (57 aa).

4 residues coordinate [4Fe-4S] cluster: Cys-21, Cys-24, Cys-33, and Cys-46.

It belongs to the high-potential iron-sulfur protein (HiPIP) family. In terms of assembly, homodimer.

In terms of biological role, specific class of high-redox-potential 4Fe-4S ferredoxins. Functions in anaerobic electron transport in most purple and in some other photosynthetic bacteria and in at least one genus (Paracoccus) of halophilic, denitrifying bacteria. The protein is High-potential iron-sulfur protein (hip) of Rhodopila globiformis (Rhodopseudomonas globiformis).